Consider the following 327-residue polypeptide: Phenylalanine--tRNA ligase alpha subunit (327 aa).

Residue glutamate 252 coordinates Mg(2+).

It belongs to the class-II aminoacyl-tRNA synthetase family. Phe-tRNA synthetase alpha subunit type 1 subfamily. In terms of assembly, tetramer of two alpha and two beta subunits. Mg(2+) is required as a cofactor.

It is found in the cytoplasm. It catalyses the reaction tRNA(Phe) + L-phenylalanine + ATP = L-phenylalanyl-tRNA(Phe) + AMP + diphosphate + H(+). The polypeptide is Phenylalanine--tRNA ligase alpha subunit (Escherichia coli O127:H6 (strain E2348/69 / EPEC)).